Reading from the N-terminus, the 117-residue chain is MVKQQSKEEIALQLKSAVYLSVAKIVEAKLEDLNNDNAATTTTESNNKNNNNNMLIATPTFIAQLVELVYNQLINLGEDLELFCQHANRDIVEPSDLFMVTRKNPTLQQHLKDLLRQ.

The protein belongs to the TAF9 family. CENP-S/MHF1 subfamily. In terms of assembly, the MHF histone-fold complex is a heterotetramer of 2 MHF1-MHF2 heterodimers. Together with MPH1/FANCM, forms the FANCM-MHF complex. Component of the inner kinetochore constitutive centromere-associated network (CCAN).

Its function is as follows. dsDNA-binding component of a FANCM-MHF complex involved in DNA damage repair and genome maintenance. FANCM-MHF promotes gene conversion at blocked replication forks, probably by reversal of the stalled fork. Component of the kinetochore, a multiprotein complex that assembles on centromeric DNA and attaches chromosomes to spindle microtubules, mediating chromosome segregation and sister chromatid segregation during meiosis and mitosis. Component of the inner kinetochore constitutive centromere-associated network (CCAN), which serves as a structural platform for outer kinetochore assembly. The polypeptide is Inner kinetochore subunit MHF1 (Candida albicans (strain SC5314 / ATCC MYA-2876) (Yeast)).